The primary structure comprises 602 residues: T-box transcription factor TBX15 (602 aa).

Positions 46-84 (ALSPAGPLGDTEDAAAHGLEPHPDSEQSTGSDSEVLTER) are disordered. Residues 71–84 (EQSTGSDSEVLTER) are compositionally biased toward polar residues. The segment at residues 122–304 (LWKRFHDIGT…RNPFAKGFRD (183 aa)) is a DNA-binding region (T-box). Residue threonine 330 is modified to Phosphothreonine. Disordered regions lie at residues 338–369 (QKQQ…LSPS) and 425–447 (QSGT…PSLI). Low complexity predominate over residues 346–369 (GTSPTTSSTGTPSPSASSHLLSPS). Residues 425–446 (QSGTTSATQPSETFMPQRTPSL) show a composition bias toward polar residues.

Can form a heterodimer with TBX18.

The protein localises to the nucleus. Probable transcriptional regulator involved in the development of the skeleton of the limb, vertebral column and head. Acts by controlling the number of mesenchymal precursor cells and chondrocytes. The polypeptide is T-box transcription factor TBX15 (TBX15) (Homo sapiens (Human)).